A 147-amino-acid chain; its full sequence is 2-amino-4-hydroxy-6-hydroxymethyldihydropteridine pyrophosphokinase (147 aa).

This sequence belongs to the HPPK family.

The catalysed reaction is 6-hydroxymethyl-7,8-dihydropterin + ATP = (7,8-dihydropterin-6-yl)methyl diphosphate + AMP + H(+). It functions in the pathway cofactor biosynthesis; tetrahydrofolate biosynthesis; 2-amino-4-hydroxy-6-hydroxymethyl-7,8-dihydropteridine diphosphate from 7,8-dihydroneopterin triphosphate: step 4/4. Its function is as follows. Catalyzes the transfer of pyrophosphate from adenosine triphosphate (ATP) to 6-hydroxymethyl-7,8-dihydropterin, an enzymatic step in folate biosynthesis pathway. This is 2-amino-4-hydroxy-6-hydroxymethyldihydropteridine pyrophosphokinase (folK) from Porphyromonas gingivalis (strain ATCC 33277 / DSM 20709 / CIP 103683 / JCM 12257 / NCTC 11834 / 2561).